The sequence spans 296 residues: GTPase Era (296 aa).

The region spanning 3 to 170 (KSGFVTIVGR…KELMFKYIPE (168 aa)) is the Era-type G domain. The G1 stretch occupies residues 11-18 (GRPNVGKS). 11–18 (GRPNVGKS) contacts GTP. Residues 37–41 (QTTRN) form a G2 region. A G3 region spans residues 58-61 (DTPG). Residues 58 to 62 (DTPGI) and 120 to 123 (NKID) contribute to the GTP site. The interval 120–123 (NKID) is G4. Residues 149 to 151 (ISA) are G5. Residues 201–278 (LSEEVPHGIA…YIRLWVKVKE (78 aa)) enclose the KH type-2 domain.

Belongs to the TRAFAC class TrmE-Era-EngA-EngB-Septin-like GTPase superfamily. Era GTPase family. As to quaternary structure, monomer.

The protein resides in the cytoplasm. It localises to the cell membrane. Functionally, an essential GTPase that binds both GDP and GTP, with rapid nucleotide exchange. Plays a role in 16S rRNA processing and 30S ribosomal subunit biogenesis and possibly also in cell cycle regulation and energy metabolism. This is GTPase Era from Clostridium botulinum (strain ATCC 19397 / Type A).